A 146-amino-acid polypeptide reads, in one-letter code: ATP synthase epsilon chain (146 aa).

Residues 102 to 122 form a disordered region; that stretch reads QSAKKRAEQHMQEAKEKHNER.

Belongs to the ATPase epsilon chain family. In terms of assembly, F-type ATPases have 2 components, CF(1) - the catalytic core - and CF(0) - the membrane proton channel. CF(1) has five subunits: alpha(3), beta(3), gamma(1), delta(1), epsilon(1). CF(0) has three main subunits: a, b and c.

The protein resides in the cell membrane. Functionally, produces ATP from ADP in the presence of a proton gradient across the membrane. This chain is ATP synthase epsilon chain, found in Lactobacillus gasseri (strain ATCC 33323 / DSM 20243 / BCRC 14619 / CIP 102991 / JCM 1131 / KCTC 3163 / NCIMB 11718 / NCTC 13722 / AM63).